Consider the following 550-residue polypeptide: Chaperonin GroEL (550 aa).

ATP is bound by residues 30–33 (TLGP), lysine 51, 87–91 (DGTTT), glycine 415, 479–481 (NAA), and aspartate 495.

The protein belongs to the chaperonin (HSP60) family. In terms of assembly, forms a cylinder of 14 subunits composed of two heptameric rings stacked back-to-back. Interacts with the co-chaperonin GroES.

Its subcellular location is the cytoplasm. The enzyme catalyses ATP + H2O + a folded polypeptide = ADP + phosphate + an unfolded polypeptide.. In terms of biological role, together with its co-chaperonin GroES, plays an essential role in assisting protein folding. The GroEL-GroES system forms a nano-cage that allows encapsulation of the non-native substrate proteins and provides a physical environment optimized to promote and accelerate protein folding. The sequence is that of Chaperonin GroEL from Burkholderia mallei (strain NCTC 10247).